A 237-amino-acid polypeptide reads, in one-letter code: Pyridoxine 5'-phosphate synthase (237 aa).

Residues Asn-7 and Arg-18 each contribute to the 3-amino-2-oxopropyl phosphate site. The active-site Proton acceptor is the His-43. 2 residues coordinate 1-deoxy-D-xylulose 5-phosphate: Arg-45 and His-50. Glu-70 acts as the Proton acceptor in catalysis. Thr-100 serves as a coordination point for 1-deoxy-D-xylulose 5-phosphate. His-190 serves as the catalytic Proton donor. 3-amino-2-oxopropyl phosphate is bound by residues Asp-191 and 213–214 (GH).

This sequence belongs to the PNP synthase family. As to quaternary structure, homooctamer; tetramer of dimers.

The protein localises to the cytoplasm. The catalysed reaction is 3-amino-2-oxopropyl phosphate + 1-deoxy-D-xylulose 5-phosphate = pyridoxine 5'-phosphate + phosphate + 2 H2O + H(+). Its pathway is cofactor biosynthesis; pyridoxine 5'-phosphate biosynthesis; pyridoxine 5'-phosphate from D-erythrose 4-phosphate: step 5/5. Its function is as follows. Catalyzes the complicated ring closure reaction between the two acyclic compounds 1-deoxy-D-xylulose-5-phosphate (DXP) and 3-amino-2-oxopropyl phosphate (1-amino-acetone-3-phosphate or AAP) to form pyridoxine 5'-phosphate (PNP) and inorganic phosphate. This is Pyridoxine 5'-phosphate synthase from Bacteroides fragilis (strain ATCC 25285 / DSM 2151 / CCUG 4856 / JCM 11019 / LMG 10263 / NCTC 9343 / Onslow / VPI 2553 / EN-2).